We begin with the raw amino-acid sequence, 281 residues long: Pantothenate synthetase (281 aa).

ATP is bound at residue 30–37; that stretch reads MGYLHEGH. Histidine 37 (proton donor) is an active-site residue. Glutamine 61 serves as a coordination point for (R)-pantoate. Glutamine 61 contacts beta-alanine. 147–150 is a binding site for ATP; that stretch reads GEKD. Residue glutamine 153 coordinates (R)-pantoate. Residues isoleucine 176 and 184–187 contribute to the ATP site; that span reads KSSR.

The protein belongs to the pantothenate synthetase family. As to quaternary structure, homodimer.

The protein resides in the cytoplasm. It catalyses the reaction (R)-pantoate + beta-alanine + ATP = (R)-pantothenate + AMP + diphosphate + H(+). It participates in cofactor biosynthesis; (R)-pantothenate biosynthesis; (R)-pantothenate from (R)-pantoate and beta-alanine: step 1/1. Functionally, catalyzes the condensation of pantoate with beta-alanine in an ATP-dependent reaction via a pantoyl-adenylate intermediate. This Clostridium botulinum (strain Okra / Type B1) protein is Pantothenate synthetase.